A 471-amino-acid chain; its full sequence is Putative multidrug resistance protein MdtD (471 aa).

At 1–11 the chain is on the periplasmic side; sequence MTDLPDSTRWQ. A helical transmembrane segment spans residues 12-32; the sequence is LWIVAFGFFMQSLDTTIVNTA. The Cytoplasmic portion of the chain corresponds to 33-48; the sequence is LPSMAQSLGESPLHMH. A helical membrane pass occupies residues 49–69; it reads MVIVSYVLTVAVMLPASGWLA. The Periplasmic segment spans residues 70-76; that stretch reads DKVGVRN. A helical transmembrane segment spans residues 77–97; sequence IFFTAIVLFTLGSLFCALSGT. At 98 to 101 the chain is on the cytoplasmic side; that stretch reads LNEL. The chain crosses the membrane as a helical span at residues 102–124; it reads LLARALQGVGGAMMVPVGRLTVM. Topologically, residues 125-137 are periplasmic; the sequence is KIVPREQYMAAMT. Residues 138–158 traverse the membrane as a helical segment; it reads FVTLPGQVGPLLGPALGGLLV. Topologically, residues 159–164 are cytoplasmic; that stretch reads EYASWH. Residues 165-185 form a helical membrane-spanning segment; the sequence is WIFLINIPVGIIGAIATLMLM. At 186 to 196 the chain is on the periplasmic side; it reads PNYTMQTRRFD. A helical membrane pass occupies residues 197-217; sequence LSGFLLLAVGMAVLTLALDGS. Topologically, residues 218-224 are cytoplasmic; it reads KGTGLSP. Residues 225 to 245 traverse the membrane as a helical segment; the sequence is LAIAGLVAVGVVALVLYLLHA. The Periplasmic portion of the chain corresponds to 246 to 262; that stretch reads RNNNRALFSLKLFRTRT. A helical membrane pass occupies residues 263–283; sequence FSLGLAGSFAGRIGSGMLPFM. Topologically, residues 284 to 285 are cytoplasmic; the sequence is TP. A helical membrane pass occupies residues 286 to 306; that stretch reads VFLQIGLGFSPFHAGLMMIPM. Over 307-341 the chain is Periplasmic; sequence VLGSMGMKRIVVQVVNRFGYRRVLVATTLGLSLVT. Residues 342-362 traverse the membrane as a helical segment; it reads MLFMTTALLGWYYVLPFVLFL. Residues 363-395 lie on the Cytoplasmic side of the membrane; it reads QGMVNSTRFSSMNTLTLKDLPDNLASSGNSLLS. The helical transmembrane segment at 396 to 416 threads the bilayer; sequence MIMQLSMSIGVTIAGLLLGLF. The Periplasmic portion of the chain corresponds to 417 to 430; sequence GSQHVSVDSGTTQT. Residues 431–451 traverse the membrane as a helical segment; the sequence is VFMYTWLSMAFIIALPAFIFA. Topologically, residues 452–471 are cytoplasmic; the sequence is RVPNDTHQNVAISRRKRSAQ.

This sequence belongs to the major facilitator superfamily. TCR/Tet family.

Its subcellular location is the cell inner membrane. This is Putative multidrug resistance protein MdtD from Escherichia coli O7:K1 (strain IAI39 / ExPEC).